The primary structure comprises 184 residues: Probable RNA 2'-phosphotransferase (184 aa).

This sequence belongs to the KptA/TPT1 family.

Functionally, removes the 2'-phosphate from RNA via an intermediate in which the phosphate is ADP-ribosylated by NAD followed by a presumed transesterification to release the RNA and generate ADP-ribose 1''-2''-cyclic phosphate (APPR&gt;P). May function as an ADP-ribosylase. The chain is Probable RNA 2'-phosphotransferase from Burkholderia pseudomallei (strain K96243).